A 554-amino-acid chain; its full sequence is Glucose-6-phosphate isomerase (554 aa).

Glu-359 acts as the Proton donor in catalysis. Catalysis depends on residues His-390 and Lys-518.

Belongs to the GPI family.

It localises to the cytoplasm. It catalyses the reaction alpha-D-glucose 6-phosphate = beta-D-fructose 6-phosphate. It functions in the pathway carbohydrate biosynthesis; gluconeogenesis. Its pathway is carbohydrate degradation; glycolysis; D-glyceraldehyde 3-phosphate and glycerone phosphate from D-glucose: step 2/4. Its function is as follows. Catalyzes the reversible isomerization of glucose-6-phosphate to fructose-6-phosphate. The sequence is that of Glucose-6-phosphate isomerase from Pseudomonas fluorescens (strain Pf0-1).